We begin with the raw amino-acid sequence, 93 residues long: MKPDIHPQYRTVLFHDTAADAYFLIGSTVDTDRTQQHTDGTTYPYVALDVSSASHPMYTGQQRKATTEGRIAGFNKRFATFGSAGKKETAAAQ.

It belongs to the bacterial ribosomal protein bL31 family. Type B subfamily. Part of the 50S ribosomal subunit.

The protein is Large ribosomal subunit protein bL31B of Pseudomonas syringae pv. syringae (strain B728a).